A 188-amino-acid chain; its full sequence is MATYYSNDFRAGLKIMLDGEPYAVEASEFVKPGKGQAFARVKLRRLLTGTRVEKTFKSTDSAEGADVVDMNLTYLYNDGEFWHFMNNETFEQLSADAKAIGDSAKWLLDQAECIVTLWNGQPITVTPPNFVELEIVDTDPGLKGDTAGTGGKPATLSTGAVVKVPLFVQIGEVIKVDTRSGEYVSRVK.

K34 bears the N6-(3,6-diaminohexanoyl)-5-hydroxylysine mark.

Belongs to the elongation factor P family. In terms of processing, may be beta-lysylated on the epsilon-amino group of Lys-34 by the combined action of EpmA and EpmB, and then hydroxylated on the C5 position of the same residue by EpmC (if this protein is present). Lysylation is critical for the stimulatory effect of EF-P on peptide-bond formation. The lysylation moiety may extend toward the peptidyltransferase center and stabilize the terminal 3-CCA end of the tRNA. Hydroxylation of the C5 position on Lys-34 may allow additional potential stabilizing hydrogen-bond interactions with the P-tRNA.

It is found in the cytoplasm. It participates in protein biosynthesis; polypeptide chain elongation. Involved in peptide bond synthesis. Alleviates ribosome stalling that occurs when 3 or more consecutive Pro residues or the sequence PPG is present in a protein, possibly by augmenting the peptidyl transferase activity of the ribosome. Modification of Lys-34 is required for alleviation. This Citrobacter koseri (strain ATCC BAA-895 / CDC 4225-83 / SGSC4696) protein is Elongation factor P.